We begin with the raw amino-acid sequence, 313 residues long: Protein ABA AND ROS SENSITIVE 1 (313 aa).

Positions 5–12 (AKKKAMFR) match the Nuclear localization signal 1 motif. The C2H2-type zinc-finger motif lies at 39 to 61 (CRVCNVVLKSESLWDVHQASRKH). The span at 115-131 (ARAEVEPAKSKNLEQSK) shows a compositional bias: basic and acidic residues. Disordered stretches follow at residues 115 to 189 (ARAE…LPTG), 232 to 254 (MEEE…QRSY), and 271 to 313 (ARLA…AQHL). Residues 155–176 (TDSSNTKTTSEPKQSQTQTTGP) are compositionally biased toward polar residues. The span at 232–248 (MEEEEVDAAETIEEEEQ) shows a compositional bias: acidic residues. A coiled-coil region spans residues 232 to 271 (MEEEEVDAAETIEEEEQREQRSYKEKVEILKRKKMELKAA). A Nuclear localization signal 2 motif is present at residues 274 to 281 (AKRSKTSE). Over residues 293-305 (ESPSDEEDDEDSA) the composition is skewed to acidic residues.

As to expression, mostly expressed in siliques and, to a lower extent, in roots. Barely deteclable in leaves and stems.

The protein localises to the nucleus. It localises to the cytoplasm. Its function is as follows. Essential for breaking seed dormancy before seed germination. Prevents reactive oxygen species (ROS) accumulation in response to abscisic acid (ABA) and oxidative stress, probably by repressing the accumulation of ABA-induced ROS-scavenging enzymes (e.g. CSD3). This chain is Protein ABA AND ROS SENSITIVE 1, found in Arabidopsis thaliana (Mouse-ear cress).